Reading from the N-terminus, the 937-residue chain is Isoleucine--tRNA ligase (937 aa).

Residues 58-68 (PYANGSIHIGH) carry the 'HIGH' region motif. Glu-561 is an L-isoleucyl-5'-AMP binding site. The 'KMSKS' region motif lies at 602 to 606 (KMSKS). An ATP-binding site is contributed by Lys-605. Cys-900, Cys-903, Cys-920, and Cys-923 together coordinate Zn(2+).

The protein belongs to the class-I aminoacyl-tRNA synthetase family. IleS type 1 subfamily. Monomer. The cofactor is Zn(2+).

The protein resides in the cytoplasm. The enzyme catalyses tRNA(Ile) + L-isoleucine + ATP = L-isoleucyl-tRNA(Ile) + AMP + diphosphate. In terms of biological role, catalyzes the attachment of isoleucine to tRNA(Ile). As IleRS can inadvertently accommodate and process structurally similar amino acids such as valine, to avoid such errors it has two additional distinct tRNA(Ile)-dependent editing activities. One activity is designated as 'pretransfer' editing and involves the hydrolysis of activated Val-AMP. The other activity is designated 'posttransfer' editing and involves deacylation of mischarged Val-tRNA(Ile). This chain is Isoleucine--tRNA ligase, found in Pectobacterium carotovorum subsp. carotovorum (strain PC1).